The primary structure comprises 50 residues: Large ribosomal subunit protein bL33 (50 aa).

The protein belongs to the bacterial ribosomal protein bL33 family.

This Citrifermentans bemidjiense (strain ATCC BAA-1014 / DSM 16622 / JCM 12645 / Bem) (Geobacter bemidjiensis) protein is Large ribosomal subunit protein bL33.